Consider the following 177-residue polypeptide: MKFFLKDGETSRALSRSESLLRRVKELGTNSQQSEISECVDEFNELASFNHLLVTVEHREWMEQHPNQSSKLRVPSRIGEMLKEIRAFLKVRVVTPMHKETASDTLNAFLEEYCRITGLAREDALREKMRKVKSVVLFHHSELLKFEVTENMFSYTELLKLNLSLRVISSQILGMAI.

As to quaternary structure, homooctamer. The eight monomers assemble into a closed ring that binds RNA.

The protein resides in the host cytoplasm. Its function is as follows. Acts as a suppressor of RNA-mediated gene silencing, also known as post-transcriptional gene silencing (PTGS), a mechanism of plant viral defense that limits the accumulation of viral RNAs. Binds to ssRNAs and dsRNAs in vitro. Also functions as a replication enhancer. The chain is RNA silencing suppressor from Beta vulgaris (Sugar beet).